The sequence spans 294 residues: UDP-3-O-acyl-N-acetylglucosamine deacetylase (294 aa).

Residues H75, H232, and D236 each coordinate Zn(2+). H259 functions as the Proton donor in the catalytic mechanism.

The protein belongs to the LpxC family. Zn(2+) serves as cofactor.

The enzyme catalyses a UDP-3-O-[(3R)-3-hydroxyacyl]-N-acetyl-alpha-D-glucosamine + H2O = a UDP-3-O-[(3R)-3-hydroxyacyl]-alpha-D-glucosamine + acetate. The protein operates within glycolipid biosynthesis; lipid IV(A) biosynthesis; lipid IV(A) from (3R)-3-hydroxytetradecanoyl-[acyl-carrier-protein] and UDP-N-acetyl-alpha-D-glucosamine: step 2/6. Functionally, catalyzes the hydrolysis of UDP-3-O-myristoyl-N-acetylglucosamine to form UDP-3-O-myristoylglucosamine and acetate, the committed step in lipid A biosynthesis. The polypeptide is UDP-3-O-acyl-N-acetylglucosamine deacetylase (Campylobacter lari (strain RM2100 / D67 / ATCC BAA-1060)).